Consider the following 77-residue polypeptide: Putative defensin-like protein 158 (77 aa).

Residues 1 to 24 (MANISWSHFLILMLVFSVVKKGKG) form the signal peptide. Intrachain disulfides connect Cys31–Cys77, Cys41–Cys60, Cys46–Cys71, and Cys50–Cys73.

The protein belongs to the DEFL family.

The protein resides in the secreted. The chain is Putative defensin-like protein 158 (LCR23) from Arabidopsis thaliana (Mouse-ear cress).